Consider the following 396-residue polypeptide: Probable sugar efflux transporter (396 aa).

Helical transmembrane passes span 15 to 35 (VVTL…PVGL), 50 to 70 (VGIM…PFML), 81 to 101 (LICL…SWSF), 103 to 123 (VLVI…SITA), 136 to 156 (AQAL…GLPL), 170 to 190 (FFAI…LLPL), 209 to 229 (PALM…YTAY), 246 to 266 (FATA…VIFG), 275 to 295 (ALVS…LPAA), 299 to 319 (IHLG…GLGM), 333 to 353 (VAMA…ALVG), and 364 to 384 (MIGY…IIIF).

This sequence belongs to the major facilitator superfamily. SotB (TC 2.A.1.2) family.

Its subcellular location is the cell inner membrane. In terms of biological role, involved in the efflux of sugars. The physiological role may be the reduction of the intracellular concentration of toxic sugars or sugar metabolites. In Escherichia coli O127:H6 (strain E2348/69 / EPEC), this protein is Probable sugar efflux transporter.